A 628-amino-acid chain; its full sequence is Chaperone protein HtpG (628 aa).

Residues 1 to 337 (MSEKKYTFET…SADLPLNVSR (337 aa)) form an a; substrate-binding region. The interval 338 to 554 (EILQHNKVID…DYGMSLHMQK (217 aa)) is b. Residues 555–628 (MMEEAGQGFM…FVKLVNKYIR (74 aa)) are c.

Belongs to the heat shock protein 90 family. Homodimer.

The protein localises to the cytoplasm. Functionally, molecular chaperone. Has ATPase activity. In Francisella tularensis subsp. novicida (strain U112), this protein is Chaperone protein HtpG.